A 364-amino-acid chain; its full sequence is Aminomethyltransferase (364 aa).

It belongs to the GcvT family. In terms of assembly, the glycine cleavage system is composed of four proteins: P, T, L and H.

The enzyme catalyses N(6)-[(R)-S(8)-aminomethyldihydrolipoyl]-L-lysyl-[protein] + (6S)-5,6,7,8-tetrahydrofolate = N(6)-[(R)-dihydrolipoyl]-L-lysyl-[protein] + (6R)-5,10-methylene-5,6,7,8-tetrahydrofolate + NH4(+). Its function is as follows. The glycine cleavage system catalyzes the degradation of glycine. This Shewanella baltica (strain OS195) protein is Aminomethyltransferase.